Reading from the N-terminus, the 458-residue chain is Histone acetyltransferase KAT8 (458 aa).

2 stretches are compositionally biased toward low complexity: residues 1-17 and 25-35; these read MAAQ…TSGT and PGENAAVEGPA. Residues 1 to 52 form a disordered region; sequence MAAQGATAAVAATTSGTVGEGEPGPGENAAVEGPARSPGRVSPPTPARGEPE. Ala-2 carries the post-translational modification N-acetylalanine. Ser-37 and Ser-42 each carry phosphoserine. Residues 55–110 form the Tudor-knot domain; that stretch reads VEIGETYLCRRPDSTWHSAEVIQSRVNDQEGREEFYVHYVGFNRRLDEWVDKNRLA. An N6-acetyllysine modification is found at Lys-113. A Nuclear localization signal motif is present at residues 140-149; the sequence is RNQKRKHDEI. Residues 174-447 form the MYST-type HAT domain; it reads TKVKYVDKIH…VDSVCLKWAP (274 aa). The segment at 174–458 is sufficient for interaction with KANSL1; it reads TKVKYVDKIH…KHKQVKLSKK (285 aa). A C2HC MYST-type zinc finger spans residues 207 to 232; it reads LWLCEYCLKYMKFEKSYRFHLGQCQW. Zn(2+) is bound by residues Cys-210, Cys-213, His-226, and Cys-230. Lys-274 carries the post-translational modification N6-acetyllysine. Acetyl-CoA-binding residues include Ile-317, Thr-319, Arg-325, Arg-326, Gly-327, Gly-329, and Lys-330. Ser-348 is subject to Phosphoserine. Glu-350 functions as the Proton donor/acceptor in the catalytic mechanism. Acetyl-CoA-binding residues include Ser-354, Ser-363, Tyr-408, and Lys-432.

This sequence belongs to the MYST (SAS/MOZ) family. In terms of assembly, component of a multisubunit histone acetyltransferase complex (MSL) at least composed of the MOF/KAT8, MSL1/hampin, MSL2L1 and MSL3L1. Component of the NSL complex at least composed of MOF/KAT8, KANSL1, KANSL2, KANSL3, MCRS1, PHF20, OGT1/OGT, WDR5 and HCFC1. Component of some MLL1/MLL complex, at least composed of the core components KMT2A/MLL1, ASH2L, HCFC1, WDR5 and RBBP5, as well as the facultative components BACC1, CHD8, E2F6, HSP70, INO80C, KANSL1, LAS1L, MAX, MCRS1, MGA, MOF/KAT8, PELP1, PHF20, PRP31, RING2, RUVB1/TIP49A, RUVB2/TIP49B, SENP3, TAF1, TAF4, TAF6, TAF7, TAF9 and TEX10. Interacts with the chromodomain of MORF4L1/MRG15. Interacts with ATM (via its Tudor-knot domain); possibly regulating the activity of ATM. Interacts with NELFD. In terms of processing, acetylation at Lys-274 facilitates cognate substrate Lys-binding and acetylation. Although considered as an autoacetylation event, acetylation at Lys-274 probably takes place via a non-enzymatic process following acetyl-CoA-binding, which primes KAT8 for cognate protein-lysine acetylation. In terms of tissue distribution, during oocyte development, expressed in both oocytes and granulosa cells.

The protein localises to the nucleus. The protein resides in the chromosome. It is found in the mitochondrion. It catalyses the reaction L-lysyl-[histone] + acetyl-CoA = N(6)-acetyl-L-lysyl-[histone] + CoA + H(+). The enzyme catalyses L-lysyl-[protein] + acetyl-CoA = N(6)-acetyl-L-lysyl-[protein] + CoA + H(+). The catalysed reaction is propanoyl-CoA + L-lysyl-[protein] = N(6)-propanoyl-L-lysyl-[protein] + CoA + H(+). Its activity is regulated as follows. The acetyltransferase activity is inhibited by anacardic acid derivatives. Its function is as follows. Histone acetyltransferase that catalyzes histone H4 acetylation at 'Lys-5'- and 'Lys-8' (H4K5ac and H4K8ac) or 'Lys-16' (H4K16ac), depending on the context. Catalytic component of the MSL histone acetyltransferase complex, a multiprotein complex that mediates the majority of histone H4 acetylation at 'Lys-16' (H4K16ac), an epigenetic mark that prevents chromatin compaction. H4K16ac constitutes the only acetylation mark intergenerationally transmitted and regulates key biological processes, such as oogenesis, embryonic stem cell pluripotency, hematopoiesis or glucose metabolism. The MSL complex is required for chromosome stability and genome integrity by maintaining homeostatic levels of H4K16ac. The MSL complex is also involved in gene dosage by promoting up-regulation of genes expressed by the X chromosome. X up-regulation is required to compensate for autosomal biallelic expression. The MSL complex also participates in gene dosage compensation by promoting expression of Tsix non-coding RNA. As part of the NSL histone acetyltransferase complex, catalyzes histone H4 acetylation at 'Lys-5'- and 'Lys-8' (H4K5ac and H4K8ac) at transcription start sites and promotes transcription initiation. The NSL complex also acts as a regulator of gene expression in mitochondria: KAT8 associates with mitochondrial DNA and controls expression of respiratory genes in an acetyltransferase-dependent mechanism. Also functions as an acetyltransferase for non-histone targets, such as ALKBH5, COX17, IRF3, KDM1A/LSD1, LMNA, PAX7 or TP53/p53. Acts as an inhibitor of antiviral immunity by acetylating IRF3, preventing IRF3 recruitment to promoters. Acts as a regulator of asymmetric division in muscle stem cells by mediating acetylation of PAX7. As part of the NSL complex, acetylates TP53/p53 at 'Lys-120'. Acts as a regulator of epithelial-to-mesenchymal transition as part of the NSL complex by mediating acetylation of KDM1A/LSD1. The NSL complex is required for nuclear architecture maintenance by mediating acetylation of LMNA. Promotes mitochondrial integrity by catalyzing acetylation of COX17. In addition to protein acetyltransferase activity, able to mediate protein propionylation. The sequence is that of Histone acetyltransferase KAT8 from Mus musculus (Mouse).